The following is a 394-amino-acid chain: Argininosuccinate synthase (394 aa).

Residues 7–15 (AYSGGLDTS) and Ala34 contribute to the ATP site. L-citrulline-binding residues include Tyr85 and Ser90. ATP is bound at residue Gly115. L-aspartate-binding residues include Thr117, Asn121, and Asp122. Residue Asn121 coordinates L-citrulline. Positions 125, 176, 185, 261, and 273 each coordinate L-citrulline.

It belongs to the argininosuccinate synthase family. Type 1 subfamily. Homotetramer.

The protein localises to the cytoplasm. The enzyme catalyses L-citrulline + L-aspartate + ATP = 2-(N(omega)-L-arginino)succinate + AMP + diphosphate + H(+). Its pathway is amino-acid biosynthesis; L-arginine biosynthesis; L-arginine from L-ornithine and carbamoyl phosphate: step 2/3. The polypeptide is Argininosuccinate synthase (Ehrlichia ruminantium (strain Welgevonden)).